The following is a 366-amino-acid chain: Peptide chain release factor 1 (366 aa).

Residue Gln239 is modified to N5-methylglutamine.

The protein belongs to the prokaryotic/mitochondrial release factor family. Methylated by PrmC. Methylation increases the termination efficiency of RF1.

The protein resides in the cytoplasm. Functionally, peptide chain release factor 1 directs the termination of translation in response to the peptide chain termination codons UAG and UAA. The polypeptide is Peptide chain release factor 1 (Baumannia cicadellinicola subsp. Homalodisca coagulata).